A 525-amino-acid chain; its full sequence is Heat shock factor protein 1 (525 aa).

Position 1 is an N-acetylmethionine (Met-1). Residues 15-120 (VPAFLTKLWT…LLENIKRKVT (106 aa)) are DNA-binding domain. Lys-80 is subject to N6-acetyllysine. Lys-91 carries the N6-acetyllysine; alternate modification. Lys-91 is covalently cross-linked (Glycyl lysine isopeptide (Lys-Gly) (interchain with G-Cter in SUMO2); alternate). Lys-118 carries the post-translational modification N6-acetyllysine. Ser-121 bears the Phosphoserine; by MAPKAPK2 mark. Residues Lys-126 and Lys-131 each participate in a glycyl lysine isopeptide (Lys-Gly) (interchain with G-Cter in SUMO2) cross-link. The segment at 130–203 (IKIRQDSVTR…ISLVQSNRIL (74 aa)) is hydrophobic repeat HR-A/B. Thr-142 is modified (phosphothreonine; by CK2). An N6-acetyllysine mark is found at Lys-150 and Lys-188. The tract at residues 203–224 (LGVKRKIPLMLSDSNSAHSVPK) is d domain. Lys-208 is modified (N6-acetyllysine; alternate). A Glycyl lysine isopeptide (Lys-Gly) (interchain with G-Cter in SUMO2); alternate cross-link involves residue Lys-208. Residue Ser-216 is modified to Phosphoserine; by PLK1. Residues 221–310 (SVPKYGRQYS…PPSPPHSPRV (90 aa)) are regulatory domain. Lys-224 participates in a covalent cross-link: Glycyl lysine isopeptide (Lys-Gly) (interchain with G-Cter in SUMO2). Phosphoserine; by CAMK2A is present on Ser-230. Disordered stretches follow at residues 272-327 (APTS…PLSP) and 340-365 (PTPAASNTAPMDTTGAQAPALPTPST). Phosphoserine occurs at positions 275 and 292. An N6-acetyllysine; alternate modification is found at Lys-298. Lys-298 participates in a covalent cross-link: Glycyl lysine isopeptide (Lys-Gly) (interchain with G-Cter in SUMO2); alternate. Lys-298 is covalently cross-linked (Glycyl lysine isopeptide (Lys-Gly) (interchain with G-Cter in SUMO); alternate). A phosphoserine mark is found at Ser-303, Ser-307, Ser-314, and Ser-319. Phosphoserine; by PKA is present on Ser-320. Phosphothreonine is present on Thr-323. Position 326 is a phosphoserine; by MAPK12 (Ser-326). Residues 343 to 355 (AASNTAPMDTTGA) show a composition bias toward polar residues. Ser-345 bears the Phosphoserine mark. Residues 367–525 (EKCLSVACLD…PHKAKDPTVS (159 aa)) form a transactivation domain region. Residues 380–405 (LSDHLDAMDSNLDNLQTMLTSHGFSV) are hydrophobic repeat HR-C. The short motif at 408–416 (SALLDLFSP) is the 9aaTAD element. Ser-415 is modified (phosphoserine; by PLK1). Position 440 is a phosphoserine (Ser-440). Disordered regions lie at residues 441-460 (PQEPPRPIEAENSNPDSGKQ) and 495-525 (YFSEGDDYTDDPTISLLTGTEPHKAKDPTVS). Over residues 515 to 525 (EPHKAKDPTVS) the composition is skewed to basic and acidic residues. Residue Lys-520 is modified to N6-acetyllysine.

This sequence belongs to the HSF family. In terms of assembly, monomer; cytoplasmic latent and transcriptionally inactive monomeric form in unstressed cells. Homotrimer; in response to stress, such as heat shock, homotrimerizes and translocates into the nucleus, binds to heat shock element (HSE) sequences in promoter of heat shock protein (HSP) genes and acquires transcriptional ability. Interacts (via monomeric form) with FKBP4; this interaction occurs in unstressed cells. Associates (via monomeric form) with HSP90 proteins in a multichaperone complex in unnstressed cell; this association maintains HSF1 in a non-DNA-binding and transcriptional inactive form by preventing HSF1 homotrimerization. Homotrimeric transactivation activity is modulated by protein-protein interactions and post-translational modifications. Interacts with HSP90AA1; this interaction is decreased in a IER5-dependent manner, promoting HSF1 accumulation in the nucleus, homotrimerization and DNA-binding activities. Part (via regulatory domain in the homotrimeric form) of a large heat shock-induced HSP90-dependent multichaperone complex at least composed of FKBP4, FKBP5, HSP90 proteins, PPID, PPP5C and PTGES3; this association maintains the HSF1 homotrimeric DNA-bound form in a transcriptionally inactive form. Interacts with BAG3 (via BAG domain); this interaction occurs in normal and heat-shocked cells promoting nuclear shuttling of HSF1 in a BAG3-dependent manner. Interacts (via homotrimeric and hyperphosphorylated form) with FKBP4; this interaction occurs upon heat shock in a HSP90-dependent multichaperone complex. Interacts (via homotrimeric form preferentially) with EEF1A proteins. In heat shocked cells, stress-denatured proteins compete with HSF1 homotrimeric DNA-bound form for association of the HSP90-dependent multichaperone complex, and hence alleviating repression of HSF1-mediated transcriptional activity. Interacts (via homotrimeric form preferentially) with DAXX; this interaction relieves homotrimeric HSF1 from repression of its transcriptional activity by HSP90-dependent multichaperone complex upon heat shock. Interacts (via D domain and preferentially with hyperphosphorylated form) with JNK1; this interaction occurs under both normal growth conditions and immediately upon heat shock. Interacts (via D domain and preferentially with hyperphosphorylated form) with MAPK3; this interaction occurs upon heat shock. Interacts with IER5 (via central region); this interaction promotes PPP2CA-induced dephosphorylation on Ser-121, Ser-307, Ser-314 and Thr-323 and HSF1 transactivation activity. Found in a ribonucleoprotein complex composed of the HSF1 homotrimeric form, translation elongation factor eEF1A proteins and non-coding RNA heat shock RNA-1 (HSR1); this complex occurs upon heat shock and stimulates HSF1 DNA-binding activity. Interacts (via transactivation domain) with HSPA1A/HSP70 and DNAJB1; these interactions result in the inhibition of heat shock- and HSF1-induced transcriptional activity during the attenuation and recovery phase from heat shock. Interacts (via Ser-303 and Ser-307 phosphorylated form) with YWHAE; this interaction promotes HSF1 sequestration in the cytoplasm in an ERK-dependent manner. Found in a complex with IER5 and PPP2CA. Interacts with TPR; this interaction increases upon heat shock and stimulates export of HSP70 mRNA. Interacts with SYMPK (via N-terminus) and CSTF2; these interactions occur upon heat shock. Interacts (via transactivation domain) with HSPA8. Interacts with EEF1D; this interaction occurs at heat shock promoter element (HSE) sequences. Interacts with MAPKAPK2. Interacts with PRKACA/PKA. Interacts (via transactivation domain) with GTF2A2. Interacts (via transactivation domain) with GTF2B. Interacts (via transactivation domain) with TBP. Interacts with CDK9, CCNT1 and EP300. Interacts (via N-terminus) with XRCC5 (via N-terminus) and XRCC6 (via N-terminus); these interactions are direct and prevent XRCC5/XRCC6 heterodimeric binding and non-homologous end joining (NHEJ) repair activities induced by ionizing radiation (IR). Interacts with PLK1; this interaction occurs during the early mitotic period, increases upon heat shock but does not modulate neither HSF1 homotrimerization and DNA-binding activities. Interacts (via Ser-216 phosphorylated form) with CDC20; this interaction occurs in mitosis in a MAD2L1-dependent manner and prevents PLK1-stimulated degradation of HSF1 by blocking the recruitment of the SCF(BTRC) ubiquitin ligase complex. Interacts with MAD2L1; this interaction occurs in mitosis. Interacts with BTRC; this interaction occurs during mitosis, induces its ubiquitin-dependent degradation following stimulus-dependent phosphorylation at Ser-216, a process inhibited by CDC20. Interacts with HSP90AA1 and HSP90AB1. Forms a complex with TTC5/STRAP and p300/EP300; these interactions augment chromatin-bound HSF1 and p300/EP300 histone acetyltransferase activity. Phosphorylated. Phosphorylated in unstressed cells; this phosphorylation is constitutive and implicated in the repression of HSF1 transcriptional activity. Phosphorylated on Ser-121 by MAPKAPK2; this phosphorylation promotes interaction with HSP90 proteins and inhibits HSF1 homotrimerization, DNA-binding and transactivation activities. Phosphorylation on Ser-303 by GSK3B/GSK3-beat and on Ser-307 by MAPK3 within the regulatory domain is involved in the repression of HSF1 transcriptional activity and occurs in a RAF1-dependent manner. Phosphorylation on Ser-303 and Ser-307 increases HSF1 nuclear export in a YWHAE- and XPO1/CRM1-dependent manner. Phosphorylation on Ser-307 is a prerequisite for phosphorylation on Ser-303. According to, Ser-303 is not phosphorylated in unstressed cells. Phosphorylated on Ser-415 by PLK1; phosphorylation promotes nuclear translocation upon heat shock. Hyperphosphorylated upon heat shock and during the attenuation and recovery phase period of the heat shock response. Phosphorylated on Thr-142; this phosphorylation increases HSF1 transactivation activity upon heat shock. Phosphorylation on Ser-230 by CAMK2A; this phosphorylation enhances HSF1 transactivation activity upon heat shock. Phosphorylation on Ser-326 by MAPK12; this phosphorylation enhances HSF1 nuclear translocation, homotrimerization and transactivation activities upon heat shock. Phosphorylated on Ser-320 by PRKACA/PKA; this phosphorylation promotes nuclear localization and transcriptional activity upon heat shock. Phosphorylated by MAPK8; this phosphorylation occurs upon heat shock, induces HSF1 translocation into nuclear stress bodies and negatively regulates transactivation activity. Neither basal nor stress-inducible phosphorylation on Ser-230, Ser-292, Ser-303, Ser-307, Ser-314, Ser-319, Ser-320, Thr-323, Ser-326, Ser-338, Ser-345, Ser-364 and Thr-365 within the regulatory domain is involved in the regulation of HSF1 subcellular localization or DNA-binding activity; however, it negatively regulates HSF1 transactivation activity. Phosphorylated on Ser-216 by PLK1 in the early mitotic period; this phosphorylation regulates HSF1 localization to the spindle pole, the recruitment of the SCF(BTRC) ubiquitin ligase complex inducing HSF1 degradation, and hence mitotic progression. Dephosphorylated on Ser-121, Ser-307, Ser-314 and Thr-323 by phosphatase PPP2CA in an IER5-dependent manner, leading to HSF1-mediated transactivation activity. In terms of processing, sumoylated with SUMO1 and SUMO2 upon heat shock in a ERK2-dependent manner. Sumoylated by SUMO1 on Lys-298; sumoylation occurs upon heat shock and promotes its localization to nuclear stress bodies and DNA-binding activity. Phosphorylation on Ser-303 and Ser-307 is probably a prerequisite for sumoylation. Post-translationally, acetylated on Lys-118; this acetylation is decreased in a IER5-dependent manner. Acetylated on Lys-118, Lys-208 and Lys-298; these acetylations occur in a EP300-dependent manner. Acetylated on Lys-80; this acetylation inhibits DNA-binding activity upon heat shock. Deacetylated on Lys-80 by SIRT1; this deacetylation increases DNA-binding activity. Ubiquitinated by SCF(BTRC) and degraded following stimulus-dependent phosphorylation at Ser-216 by PLK1 in mitosis. Polyubiquitinated. Undergoes proteasomal degradation upon heat shock and during the attenuation and recovery phase period of the heat shock response.

It localises to the nucleus. The protein resides in the cytoplasm. Its subcellular location is the nucleoplasm. It is found in the perinuclear region. The protein localises to the cytoskeleton. It localises to the spindle pole. The protein resides in the microtubule organizing center. Its subcellular location is the centrosome. It is found in the chromosome. The protein localises to the centromere. It localises to the kinetochore. Functionally, functions as a stress-inducible and DNA-binding transcription factor that plays a central role in the transcriptional activation of the heat shock response (HSR), leading to the expression of a large class of molecular chaperones, heat shock proteins (HSPs), that protect cells from cellular insult damage. In unstressed cells, is present in a HSP90-containing multichaperone complex that maintains it in a non-DNA-binding inactivated monomeric form. Upon exposure to heat and other stress stimuli, undergoes homotrimerization and activates HSP gene transcription through binding to site-specific heat shock elements (HSEs) present in the promoter regions of HSP genes. Upon heat shock stress, forms a chromatin-associated complex with TTC5/STRAP and p300/EP300 to stimulate HSR transcription, therefore increasing cell survival. Activation is reversible, and during the attenuation and recovery phase period of the HSR, returns to its unactivated form. Binds to inverted 5'-NGAAN-3' pentamer DNA sequences. Binds to chromatin at heat shock gene promoters. Activates transcription of transcription factor FOXR1 which in turn activates transcription of the heat shock chaperones HSPA1A and HSPA6 and the antioxidant NADPH-dependent reductase DHRS2. Binds the promoter region upstream of exon 1 of Mpv17l to activate expression of the M-LPS isoform which is involved in metabolism of reactive oxygen species. Also serves several other functions independently of its transcriptional activity. Involved in the repression of Ras-induced transcriptional activation of the c-fos gene in heat-stressed cells. Positively regulates pre-mRNA 3'-end processing and polyadenylation of HSP70 mRNA upon heat-stressed cells in a symplekin (SYMPK)-dependent manner. Plays a role in nuclear export of stress-induced HSP70 mRNA. Plays a role in the regulation of mitotic progression. Also plays a role as a negative regulator of non-homologous end joining (NHEJ) repair activity in a DNA damage-dependent manner. Involved in stress-induced cancer cell proliferation in a IER5-dependent manner. The protein is Heat shock factor protein 1 of Mus musculus (Mouse).